The primary structure comprises 119 residues: Ribonuclease P protein component (119 aa).

This sequence belongs to the RnpA family. Consists of a catalytic RNA component (M1 or rnpB) and a protein subunit.

The enzyme catalyses Endonucleolytic cleavage of RNA, removing 5'-extranucleotides from tRNA precursor.. Functionally, RNaseP catalyzes the removal of the 5'-leader sequence from pre-tRNA to produce the mature 5'-terminus. It can also cleave other RNA substrates such as 4.5S RNA. The protein component plays an auxiliary but essential role in vivo by binding to the 5'-leader sequence and broadening the substrate specificity of the ribozyme. The sequence is that of Ribonuclease P protein component from Escherichia fergusonii (strain ATCC 35469 / DSM 13698 / CCUG 18766 / IAM 14443 / JCM 21226 / LMG 7866 / NBRC 102419 / NCTC 12128 / CDC 0568-73).